The sequence spans 231 residues: S-norcoclaurine synthase 2 (231 aa).

107-109 (YKE) contributes to the dopamine binding site. Lysine 121 functions as the Proton donor in the catalytic mechanism. Aspartate 140 is a (4-hydroxyphenyl)acetaldehyde binding site. Residues 210–230 (LLLCLIICLVIAGGMFVAGVP) traverse the membrane as a helical segment.

This sequence belongs to the BetVI family. As to expression, expressed in roots, stems and leaves. Detected in flower buds and germinating seeds. Low expression in carpels. Restricted to sieve elements of the phloem adjacent or proximal to laticifers.

Its subcellular location is the endoplasmic reticulum membrane. It is found in the vacuole membrane. The catalysed reaction is (4-hydroxyphenyl)acetaldehyde + dopamine = (S)-norcoclaurine + H2O. Its pathway is alkaloid biosynthesis; (S)-reticuline biosynthesis. Activity doubles within 5 hours of elicitor treatment and continues to increase for at least 80 hours. Functionally, involved in the biosynthesis of (S)-coclaurine, the common precursor of all benzylisoquinoline alkaloids such as morphine, sanguinarine, codeine or papaverine. Condenses dopamine and 4-hydroxyphenylacetaldehyde. The sequence is that of S-norcoclaurine synthase 2 from Papaver somniferum (Opium poppy).